The sequence spans 323 residues: Arginase, hepatic (323 aa).

His102, Asp125, His127, and Asp129 together coordinate Mn(2+). Residues 127–131, 138–140, and Asp184 contribute to the substrate site; these read HADIN and SGN. Mn(2+) contacts are provided by Asp233 and Asp235. Substrate-binding residues include Thr247 and Glu278.

The protein belongs to the arginase family. Homotrimer. Requires Mn(2+) as cofactor.

It carries out the reaction L-arginine + H2O = urea + L-ornithine. It participates in nitrogen metabolism; urea cycle; L-ornithine and urea from L-arginine: step 1/1. The sequence is that of Arginase, hepatic from Aquarana catesbeiana (American bullfrog).